The sequence spans 476 residues: MVRVRLAPSPTGTLHIGTARTAVFNWLFARNQNGSFLLRIEDTDKERSKPEFTQNILEGLQWLGLDWDGDPVIQSEQTERHRSAIQTLLEKGLAYRCYASEEELDAMRTQQKAANQAPRYDNRHRDLTPEQEAAFQAEGRDAVIRFRIDEHREIRWNDLVRGPMLWRGADLGGDMVVARRAPADQIGDPLYNLVVVIDDAAMAISHVIRGEDHIANTAKQLLLYEALSLPVPTFAHAPLILNPEGRKLSKRDGVTSINDFRAMGYTPEALANYMTLLGWSVPEGMNEIFTLEAAAKVFDFDRVNKAGAKFDWDKLNWLNAQVLHSWEPANLLNALAPLWADQGWTLPDTTGWSLSLVELLGPSLTLLNDGVDQAKPFFMEPALEDDALKQLDQEGAKACLQALLSTLEEAPWSGESIDQAQEMLKSAAATAGVKKGILMKSLRAALLGRLQGPDLLTTWSLLAQIGQDLPRLRRCL.

The short motif at P8–T18 is the 'HIGH' region element. A 'KMSKS' region motif is present at residues K247–R251. K250 is an ATP binding site.

It belongs to the class-I aminoacyl-tRNA synthetase family. Glutamate--tRNA ligase type 1 subfamily. As to quaternary structure, monomer.

The protein resides in the cytoplasm. The catalysed reaction is tRNA(Glu) + L-glutamate + ATP = L-glutamyl-tRNA(Glu) + AMP + diphosphate. Catalyzes the attachment of glutamate to tRNA(Glu) in a two-step reaction: glutamate is first activated by ATP to form Glu-AMP and then transferred to the acceptor end of tRNA(Glu). The sequence is that of Glutamate--tRNA ligase from Synechococcus sp. (strain WH7803).